The sequence spans 584 residues: Asparagine synthetase [glutamine-hydrolyzing] 1 (584 aa).

C2 (for GATase activity) is an active-site residue. The Glutamine amidotransferase type-2 domain maps to C2 to G185. L-glutamine-binding positions include R50–I54, N75–E77, and D98. Residues P193 to P516 enclose the Asparagine synthetase domain. ATP is bound by residues L231, V267, and S341 to G342.

It carries out the reaction L-aspartate + L-glutamine + ATP + H2O = L-asparagine + L-glutamate + AMP + diphosphate + H(+). It functions in the pathway amino-acid biosynthesis; L-asparagine biosynthesis; L-asparagine from L-aspartate (L-Gln route): step 1/1. Functionally, essential for nitrogen assimilation, distribution and remobilization within the plant via the phloem. The polypeptide is Asparagine synthetase [glutamine-hydrolyzing] 1 (ASN1) (Arabidopsis thaliana (Mouse-ear cress)).